The sequence spans 406 residues: Cysteine desulfurase (406 aa).

Lys-226 carries the N6-(pyridoxal phosphate)lysine modification. Cys-364 serves as the catalytic Cysteine persulfide intermediate.

It belongs to the class-V pyridoxal-phosphate-dependent aminotransferase family. Csd subfamily. In terms of assembly, homodimer. Interacts with SufE and the SufBCD complex composed of SufB, SufC and SufD. The interaction with SufE is required to mediate the direct transfer of the sulfur atom from the S-sulfanylcysteine. Pyridoxal 5'-phosphate serves as cofactor.

Its subcellular location is the cytoplasm. It carries out the reaction (sulfur carrier)-H + L-cysteine = (sulfur carrier)-SH + L-alanine. It catalyses the reaction L-selenocysteine + AH2 = hydrogenselenide + L-alanine + A + H(+). The protein operates within cofactor biosynthesis; iron-sulfur cluster biosynthesis. Functionally, cysteine desulfurases mobilize the sulfur from L-cysteine to yield L-alanine, an essential step in sulfur metabolism for biosynthesis of a variety of sulfur-containing biomolecules. Component of the suf operon, which is activated and required under specific conditions such as oxidative stress and iron limitation. Acts as a potent selenocysteine lyase in vitro, that mobilizes selenium from L-selenocysteine. Selenocysteine lyase activity is however unsure in vivo. The chain is Cysteine desulfurase from Cronobacter sakazakii (strain ATCC BAA-894) (Enterobacter sakazakii).